A 536-amino-acid polypeptide reads, in one-letter code: Membrane protein insertase YidC (536 aa).

Residues 7 to 27 (IIAVVLSLFVLIGWSYLSEFM) form a helical membrane-spanning segment. Positions 43–70 (VQQKASEPVAQPVQTASAPAASSFAPTE) are disordered. The segment covering 58–68 (ASAPAASSFAP) has biased composition (low complexity). The next 3 helical transmembrane spans lie at 346–366 (GNYG…FWPL), 415–435 (GGCL…QGLL), and 495–515 (IMMF…AGLV).

It belongs to the OXA1/ALB3/YidC family. Type 1 subfamily. Interacts with the Sec translocase complex via SecD. Specifically interacts with transmembrane segments of nascent integral membrane proteins during membrane integration.

Its subcellular location is the cell inner membrane. Required for the insertion and/or proper folding and/or complex formation of integral membrane proteins into the membrane. Involved in integration of membrane proteins that insert both dependently and independently of the Sec translocase complex, as well as at least some lipoproteins. Aids folding of multispanning membrane proteins. The sequence is that of Membrane protein insertase YidC from Oleidesulfovibrio alaskensis (strain ATCC BAA-1058 / DSM 17464 / G20) (Desulfovibrio alaskensis).